Here is a 456-residue protein sequence, read N- to C-terminus: Two pore potassium channel c (456 aa).

The segment covering 1 to 19 (MDTEPLLSPLSPSPHLLHP) has biased composition (low complexity). The disordered stretch occupies residues 1 to 112 (MDTEPLLSPL…PPSLFDFIGG (112 aa)). The Cytoplasmic portion of the chain corresponds to 1–152 (MDTEPLLSPL…RNPPPPPRRP (152 aa)). Residues 52-67 (HPPPPPPPPPPPPPPP) show a composition bias toward pro residues. Residues 153–173 (AIVLHAFLFLLAYLAMGVTFY) form a helical membrane-spanning segment. Positions 192–211 (DALYFCIVTLCTIGYGDITP) form an intramembrane region, pore-forming. A helical transmembrane segment spans residues 223 to 243 (FVLIGFGFVDILLSGMVSYVL). Over 244–279 (DLQEHLLITALKNPRSVRKHRHNYIFDLKKGRMRVR) the chain is Cytoplasmic. A helical membrane pass occupies residues 280 to 300 (MKVALALTVVAICVGVGAAVL). Positions 310-329 (DAVYLAVMSVTTVGYGDHAF) form an intramembrane region, pore-forming. A helical membrane pass occupies residues 336–356 (LFASAWLLVSTLAVARAFLYL). Residues 357-456 (AEMRIDKRHR…LNEKKKGKKS (100 aa)) are Cytoplasmic-facing. 2 EF-hand domains span residues 373-408 (LSRD…EMGK) and 412-447 (KDIM…VTDL). Positions 386, 388, 390, 392, 397, 425, 431, and 436 each coordinate Ca(2+).

This sequence belongs to the two pore domain potassium channel (TC 1.A.1.7) family. As to quaternary structure, homodimer.

Its subcellular location is the membrane. In terms of biological role, inward-rectifying potassium channel. The sequence is that of Two pore potassium channel c (TPKC) from Oryza sativa subsp. japonica (Rice).